Here is a 323-residue protein sequence, read N- to C-terminus: Elongation factor P--(R)-beta-lysine ligase (323 aa).

Position 76–78 (76–78 (SPE)) interacts with substrate. ATP contacts are provided by residues 100–102 (RNE) and Asn-109. Tyr-118 serves as a coordination point for substrate. 242–243 (EL) provides a ligand contact to ATP. Substrate is bound at residue Glu-249. Residue Gly-298 coordinates ATP.

This sequence belongs to the class-II aminoacyl-tRNA synthetase family. EpmA subfamily. In terms of assembly, homodimer.

It carries out the reaction D-beta-lysine + L-lysyl-[protein] + ATP = N(6)-((3R)-3,6-diaminohexanoyl)-L-lysyl-[protein] + AMP + diphosphate + H(+). Functionally, with EpmB is involved in the beta-lysylation step of the post-translational modification of translation elongation factor P (EF-P). Catalyzes the ATP-dependent activation of (R)-beta-lysine produced by EpmB, forming a lysyl-adenylate, from which the beta-lysyl moiety is then transferred to the epsilon-amino group of a conserved specific lysine residue in EF-P. This is Elongation factor P--(R)-beta-lysine ligase from Pasteurella multocida (strain Pm70).